The chain runs to 240 residues: uncharacterized protein (240 aa).

The signal sequence occupies residues 1-18; that stretch reads MTRYTYLFILQIISCSFA. N127 carries an N-linked (GlcNAc...) asparagine glycan. The chain crosses the membrane as a helical span at residues 215–235; that stretch reads GFISSSQLPQFVYLIVFTIIG.

The protein resides in the membrane. This is an uncharacterized protein from Caenorhabditis elegans.